Here is a 397-residue protein sequence, read N- to C-terminus: 2,6-dihydroxypyridine 3-monooxygenase (397 aa).

Residues 14–16 (SIS), 35–36 (ER), V49, L120, D306, and 316–320 (AAGGA) contribute to the FAD site.

Homodimer. It depends on FAD as a cofactor.

The catalysed reaction is 2,6-dihydroxypyridine + NADH + O2 + H(+) = 2,3,6-trihydroxypyridine + NAD(+) + H2O. The protein operates within alkaloid degradation; nicotine degradation. Its function is as follows. Catalyzes the conversion of 2,6-dihydroxypyridine into 2,3,6-trihydroxypyridine in the nicotine degradation pathway. The sequence is that of 2,6-dihydroxypyridine 3-monooxygenase (dhpH) from Paenarthrobacter nicotinovorans (Arthrobacter nicotinovorans).